A 184-amino-acid chain; its full sequence is Urease accessory protein UreE (184 aa).

The interval 147 to 184 (EHHGHSHSHSHSHDHDHDHDHDHQHGPSCSHGHHHGHR) is disordered. Residues 157–171 (HSHDHDHDHDHDHQH) are compositionally biased toward basic and acidic residues.

The protein belongs to the UreE family.

It localises to the cytoplasm. Involved in urease metallocenter assembly. Binds nickel. Probably functions as a nickel donor during metallocenter assembly. This Burkholderia mallei (strain ATCC 23344) protein is Urease accessory protein UreE.